Reading from the N-terminus, the 97-residue chain is Small ribosomal subunit protein bS6 (97 aa).

It belongs to the bacterial ribosomal protein bS6 family.

Functionally, binds together with bS18 to 16S ribosomal RNA. This Syntrophomonas wolfei subsp. wolfei (strain DSM 2245B / Goettingen) protein is Small ribosomal subunit protein bS6.